Consider the following 44-residue polypeptide: Mu-conotoxin-like Cal 12.1.2f (44 aa).

4 disulfide bridges follow: cysteine 3–cysteine 15, cysteine 10–cysteine 27, cysteine 17–cysteine 32, and cysteine 26–cysteine 38. Tryptophan 16 is subject to 6'-bromotryptophan. A 4-hydroxyproline modification is found at proline 22. A 6'-bromotryptophan mark is found at tryptophan 36 and tryptophan 37. Proline 39 is modified (4-hydroxyproline). A 6'-bromotryptophan modification is found at tryptophan 43.

In terms of tissue distribution, expressed by the venom duct.

It is found in the secreted. In terms of biological role, mu-conotoxins block voltage-gated sodium channels. This toxin reversibly blocks voltage-gated sodium channel in cephalopods, with no alteration in the voltage dependence of sodium conductance or on the kinetics of inactivation. The polypeptide is Mu-conotoxin-like Cal 12.1.2f (Californiconus californicus (California cone)).